The chain runs to 358 residues: Fructose-bisphosphate aldolase (358 aa).

Ser62 is a binding site for D-glyceraldehyde 3-phosphate. The active-site Proton donor is the Asp109. Zn(2+)-binding residues include His110, Asp144, Glu174, and His226. Residue Gly227 participates in dihydroxyacetone phosphate binding. His264 contributes to the Zn(2+) binding site. Residues 265–267 (GGS) and 286–289 (NIDT) contribute to the dihydroxyacetone phosphate site.

The protein belongs to the class II fructose-bisphosphate aldolase family. Requires Zn(2+) as cofactor.

The enzyme catalyses beta-D-fructose 1,6-bisphosphate = D-glyceraldehyde 3-phosphate + dihydroxyacetone phosphate. It participates in carbohydrate degradation; glycolysis; D-glyceraldehyde 3-phosphate and glycerone phosphate from D-glucose: step 4/4. Functionally, catalyzes the aldol condensation of dihydroxyacetone phosphate (DHAP or glycerone-phosphate) with glyceraldehyde 3-phosphate (G3P) to form fructose 1,6-bisphosphate (FBP) in gluconeogenesis and the reverse reaction in glycolysis. This is Fructose-bisphosphate aldolase (fba) from Edwardsiella ictaluri (strain 93-146).